The chain runs to 166 residues: NADPH-dependent 7-cyano-7-deazaguanine reductase (166 aa).

Cysteine 57 acts as the Thioimide intermediate in catalysis. Aspartate 64 (proton donor) is an active-site residue. Substrate contacts are provided by residues 79-81 and 98-99; these read VES and HE.

Belongs to the GTP cyclohydrolase I family. QueF type 1 subfamily.

The protein localises to the cytoplasm. The catalysed reaction is 7-aminomethyl-7-carbaguanine + 2 NADP(+) = 7-cyano-7-deazaguanine + 2 NADPH + 3 H(+). Its pathway is tRNA modification; tRNA-queuosine biosynthesis. Catalyzes the NADPH-dependent reduction of 7-cyano-7-deazaguanine (preQ0) to 7-aminomethyl-7-deazaguanine (preQ1). This Staphylococcus aureus (strain JH1) protein is NADPH-dependent 7-cyano-7-deazaguanine reductase.